The primary structure comprises 1378 residues: Carboxypeptidase D (1378 aa).

An N-terminal signal peptide occupies residues 1 to 37; it reads MASGWDERPPWRLESLRLLPPPPLLLLLLLLRSSAQA. The Extracellular segment spans residues 38-1297; sequence AHIKKAEATT…DNRIFGLPRE (1260 aa). The Peptidase M14 1 domain occupies 62 to 380; it reads HYYHEAALGE…ESLITLIEKV (319 aa). Residues His139 and Glu142 each coordinate Zn(2+). The Cell attachment site motif lies at 162–164; that stretch reads RGD. Residues Asn172 and Asn217 are each glycosylated (N-linked (GlcNAc...) asparagine). Residues 189–232 are disordered; sequence RAREGDCGLGDSGPPGTSGRDNSRGRDLNRSFPDQFSTGEPPSL. His257 lines the Zn(2+) pocket. Tyr265 is subject to Phosphotyrosine. Ser270 carries the phosphoserine modification. The Proton donor/acceptor role is filled by Glu350. Asn399, Asn410, Asn429, and Asn522 each carry an N-linked (GlcNAc...) asparagine glycan. A Peptidase M14 2 domain is found at 502-792; the sequence is HHHHFPDMEI…RSLIQFMKQV (291 aa). His564 and Glu567 together coordinate Zn(2+). Residue Asn626 is glycosylated (N-linked (GlcNAc...) asparagine). His671 provides a ligand contact to Zn(2+). Residue Glu762 is the Proton donor/acceptor of the active site. 6 N-linked (GlcNAc...) asparagine glycosylation sites follow: Asn811, Asn855, Asn867, Asn879, Asn953, and Asn976. Residues 875–898 form a disordered region; it reads TDANNESKKGKGHSTSTDDTSDPT. In terms of domain architecture, Peptidase M14 3 spans 930–1209; sequence RYHSYKDLSE…KSLLSMLVEV (280 aa). The segment covering 1039–1048 has biased composition (basic and acidic residues); it reads RERAQEKDCT. A disordered region spans residues 1039-1068; that stretch reads RERAQEKDCTSKTGHTNARGRDLDTDFTSN. Asn1068 and Asn1140 each carry an N-linked (GlcNAc...) asparagine glycan. Residues 1298 to 1318 form a helical membrane-spanning segment; that stretch reads LVVTVSGATMSALILTACIIW. 3 S-palmitoyl cysteine lipidation sites follow: Cys1315, Cys1319, and Cys1321. The Cytoplasmic segment spans residues 1319–1378; sequence CICSIKSNRHKDGFHRLRQHHDEYEDEIRMMSTGSKKSLLSHEFQDETDTEEETLYSSKH. Phosphoserine is present on residues Ser1356 and Ser1359. The segment at 1357 to 1378 is disordered; the sequence is LLSHEFQDETDTEEETLYSSKH. A phosphothreonine mark is found at Thr1366 and Thr1368.

It belongs to the peptidase M14 family. Zn(2+) serves as cofactor. In terms of tissue distribution, isoform 1 is widely expressed with highest levels in the hippocampus, spinal cord, atrium, colon, testis and ovaries. Detected in the liver of females but not males. Isoform 2 is not detected in brain or lung.

The protein resides in the cell membrane. It is found in the nucleus. It catalyses the reaction Releases C-terminal Arg and Lys from polypeptides.. The protein is Carboxypeptidase D of Rattus norvegicus (Rat).